The sequence spans 262 residues: 3-methyl-2-oxobutanoate hydroxymethyltransferase (262 aa).

2 residues coordinate Mg(2+): Asp-43 and Asp-82. Residues 43–44 (DS), Asp-82, and Lys-110 each bind 3-methyl-2-oxobutanoate. Glu-112 contributes to the Mg(2+) binding site. The active-site Proton acceptor is the Glu-179.

This sequence belongs to the PanB family. As to quaternary structure, homodecamer; pentamer of dimers. Mg(2+) is required as a cofactor.

The protein resides in the cytoplasm. The enzyme catalyses 3-methyl-2-oxobutanoate + (6R)-5,10-methylene-5,6,7,8-tetrahydrofolate + H2O = 2-dehydropantoate + (6S)-5,6,7,8-tetrahydrofolate. It functions in the pathway cofactor biosynthesis; (R)-pantothenate biosynthesis; (R)-pantoate from 3-methyl-2-oxobutanoate: step 1/2. Its function is as follows. Catalyzes the reversible reaction in which hydroxymethyl group from 5,10-methylenetetrahydrofolate is transferred onto alpha-ketoisovalerate to form ketopantoate. In Sodalis glossinidius (strain morsitans), this protein is 3-methyl-2-oxobutanoate hydroxymethyltransferase.